Consider the following 499-residue polypeptide: Probable cytosol aminopeptidase (499 aa).

The Mn(2+) site is built by lysine 263 and aspartate 268. Lysine 275 is a catalytic residue. Mn(2+)-binding residues include aspartate 286, aspartate 345, and glutamate 347. Arginine 349 is an active-site residue.

This sequence belongs to the peptidase M17 family. The cofactor is Mn(2+).

The protein localises to the cytoplasm. It carries out the reaction Release of an N-terminal amino acid, Xaa-|-Yaa-, in which Xaa is preferably Leu, but may be other amino acids including Pro although not Arg or Lys, and Yaa may be Pro. Amino acid amides and methyl esters are also readily hydrolyzed, but rates on arylamides are exceedingly low.. The catalysed reaction is Release of an N-terminal amino acid, preferentially leucine, but not glutamic or aspartic acids.. Functionally, presumably involved in the processing and regular turnover of intracellular proteins. Catalyzes the removal of unsubstituted N-terminal amino acids from various peptides. The protein is Probable cytosol aminopeptidase (pepA) of Chlamydia muridarum (strain MoPn / Nigg).